The primary structure comprises 362 residues: Cobalt-precorrin-5B C(1)-methyltransferase (362 aa).

The protein belongs to the CbiD family.

The enzyme catalyses Co-precorrin-5B + S-adenosyl-L-methionine = Co-precorrin-6A + S-adenosyl-L-homocysteine. Its pathway is cofactor biosynthesis; adenosylcobalamin biosynthesis; cob(II)yrinate a,c-diamide from sirohydrochlorin (anaerobic route): step 6/10. Catalyzes the methylation of C-1 in cobalt-precorrin-5B to form cobalt-precorrin-6A. The polypeptide is Cobalt-precorrin-5B C(1)-methyltransferase (Geotalea daltonii (strain DSM 22248 / JCM 15807 / FRC-32) (Geobacter daltonii)).